The chain runs to 1136 residues: Phytochrome (1136 aa).

The tract at residues 1–28 (MSTTRPRAATHSASSGSVSRSSKHSARV) is disordered. Over residues 11 to 20 (HSASSGSVSR) the composition is skewed to low complexity. The GAF domain maps to 231 to 414 (DIRLLCDTVV…VFGIQLNKEV (184 aa)). Cysteine 336 provides a ligand contact to phytochromobilin. 2 consecutive PAS domains span residues 629-699 (VTNE…LQGE) and 762-833 (DYRA…TKLR). The 220-residue stretch at 913 to 1132 (YIRQEIRNPL…IINVEFPLAQ (220 aa)) folds into the Histidine kinase domain.

Belongs to the phytochrome family. As to quaternary structure, homodimer. Post-translationally, contains one covalently linked phytochromobilin chromophore.

Functionally, regulatory photoreceptor which exists in two forms that are reversibly interconvertible by light: the Pr form that absorbs maximally in the red region of the spectrum and the Pfr form that absorbs maximally in the far-red region. Photoconversion of Pr to Pfr induces an array of morphogenic responses, whereas reconversion of Pfr to Pr cancels the induction of those responses. Pfr controls the expression of a number of nuclear genes including those encoding the small subunit of ribulose-bisphosphate carboxylase, chlorophyll A/B binding protein, protochlorophyllide reductase, rRNA, etc. It also controls the expression of its own gene(s) in a negative feedback fashion. In Picea abies (Norway spruce), this protein is Phytochrome.